We begin with the raw amino-acid sequence, 360 residues long: DNA integrity scanning protein DisA (360 aa).

Positions 9–147 (DNDLMDILNI…NNIKYVLRDS (139 aa)) constitute a DAC domain. Residues Gly-76, Leu-94, and 107-111 (TRHRT) contribute to the ATP site.

The protein belongs to the DisA family. Homooctamer. Requires Mg(2+) as cofactor.

The enzyme catalyses 2 ATP = 3',3'-c-di-AMP + 2 diphosphate. In terms of biological role, participates in a DNA-damage check-point that is active prior to asymmetric division when DNA is damaged. DisA forms globular foci that rapidly scan along the chromosomes during sporulation, searching for lesions. When a lesion is present, DisA pauses at the lesion site. This triggers a cellular response that culminates in a temporary block in sporulation initiation. Also has diadenylate cyclase activity, catalyzing the condensation of 2 ATP molecules into cyclic di-AMP (c-di-AMP). c-di-AMP acts as a signaling molecule that couples DNA integrity with progression of sporulation. The rise in c-di-AMP level generated by DisA while scanning the chromosome, operates as a positive signal that advances sporulation; upon encountering a lesion, the DisA focus arrests at the damaged site and halts c-di-AMP synthesis. The protein is DNA integrity scanning protein DisA of Clostridium tetani (strain Massachusetts / E88).